A 414-amino-acid polypeptide reads, in one-letter code: F-box protein At3g47030 (414 aa).

Residues 1-24 (MSGMLGLSAVMGKRPKQQVTARPR) are disordered. An F-box domain is found at 28–77 (IEKPEEIPDDLLIDVFSRLSIEDVARCRCLSRFWSSILRRRYFTELFHKM).

This chain is F-box protein At3g47030, found in Arabidopsis thaliana (Mouse-ear cress).